The primary structure comprises 303 residues: Taste receptor type 2 member 13 (303 aa).

Topologically, residues 1–7 are extracellular; sequence MESALPS. The helical transmembrane segment at 8-28 threads the bilayer; the sequence is ILTLVIIAEFIIGNLSNGFIV. Topologically, residues 29 to 55 are cytoplasmic; sequence LINYIDWVSKRELSSVDKLLIILAISR. Residues 56 to 76 traverse the membrane as a helical segment; the sequence is IGLIWEILVSWFLALHYLAIF. Topologically, residues 77-85 are extracellular; sequence VSGTGLRIM. The helical transmembrane segment at 86–106 threads the bilayer; that stretch reads IFSWIVSNHFSLWLATILSIF. Topologically, residues 107–128 are cytoplasmic; the sequence is YLLKIASFSSPAFLYLKWRVNK. The chain crosses the membrane as a helical span at residues 129 to 149; it reads VILMILLGSLVFLFLNLIQIN. Residues 150–184 lie on the Extracellular side of the membrane; that stretch reads IHIKDWLDRYEGNTTWNFSMSDFVTFSVSVKFTMT. 2 N-linked (GlcNAc...) asparagine glycosylation sites follow: asparagine 162 and asparagine 166. Residues 185-205 form a helical membrane-spanning segment; it reads MFSLTPFTVALISFSLLIFSL. Residues 206-232 are Cytoplasmic-facing; that stretch reads QKHLQKMQLNYKGHREPRTKVHTNALK. Residues 233-253 traverse the membrane as a helical segment; that stretch reads IVISFLLLYASFFLCILISWI. The Extracellular segment spans residues 254-261; the sequence is SELYQNTA. The chain crosses the membrane as a helical span at residues 262–282; sequence IYMLCETIGLFYPSSHSFLLI. Over 283–303 the chain is Cytoplasmic; that stretch reads LGNPKLRQAFLLVAAKVWAKR.

This sequence belongs to the G-protein coupled receptor T2R family.

The protein resides in the membrane. In terms of biological role, receptor that may play a role in the perception of bitterness and is gustducin-linked. May play a role in sensing the chemical composition of the gastrointestinal content. The activity of this receptor may stimulate alpha gustducin, mediate PLC-beta-2 activation and lead to the gating of TRPM5. The protein is Taste receptor type 2 member 13 (TAS2R13) of Pongo pygmaeus (Bornean orangutan).